Consider the following 579-residue polypeptide: Insulin-like growth factor 2 mRNA-binding protein 3 (579 aa).

RRM domains are found at residues 2 to 75 (NKLY…HSVP) and 81 to 156 (RKLQ…YIPD). The tract at residues 158 to 192 (TAAQQNPSPQLRGRRGPGQRGSSRQASPGSVSKQK) is disordered. Ser165 is subject to Phosphoserine. Residue Ser184 is modified to Phosphoserine; by MTOR. KH domains are found at residues 195–260 (DLPL…CKSI), 276–343 (EIPL…EEEI), and 405–470 (TETV…QGRI). Glycyl lysine isopeptide (Lys-Gly) (interchain with G-Cter in SUMO2) cross-links involve residues Lys450 and Lys475. In terms of domain architecture, KH 4 spans 487 to 553 (KLEAHIRVPS…YACQVAQRKI (67 aa)). The residue at position 528 (Thr528) is a Phosphothreonine.

The protein belongs to the RRM IMP/VICKZ family. Can form homooligomers and heterooligomers with IGF2BP1 and IGF2BP3 in an RNA-dependent manner. Interacts with IGF2BP1. Interacts with ELAVL1, DHX9, HNRNPU, MATR3 and PABPC1. In terms of tissue distribution, expressed in oocytes, spermatogonia and spermatocytes (at protein level).

The protein resides in the nucleus. It is found in the cytoplasm. It localises to the P-body. Its subcellular location is the stress granule. In terms of biological role, RNA-binding factor that may recruit target transcripts to cytoplasmic protein-RNA complexes (mRNPs). This transcript 'caging' into mRNPs allows mRNA transport and transient storage. It also modulates the rate and location at which target transcripts encounter the translational apparatus and shields them from endonuclease attacks or microRNA-mediated degradation. Preferentially binds to N6-methyladenosine (m6A)-containing mRNAs and increases their stability. Binds to the 3'-UTR of CD44 mRNA and stabilizes it, hence promotes cell adhesion and invadopodia formation. Binds to beta-actin/ACTB and MYC transcripts. Increases MYC mRNA stability by binding to the coding region instability determinant (CRD) and binding is enhanced by m6A-modification of the CRD. Binds to the 5'-UTR of the insulin-like growth factor 2 (IGF2) mRNAs. The chain is Insulin-like growth factor 2 mRNA-binding protein 3 (Igf2bp3) from Mus musculus (Mouse).